The primary structure comprises 266 residues: Flavin-dependent thymidylate synthase (266 aa).

In terms of domain architecture, ThyX spans G11–H222. Residues S57, R80 to R82, and E88 each bind FAD. DUMP-binding positions include Q77–R80, E88–R92, and R161. Positions R80 to S90 match the ThyX motif motif. Residues D177–H179 and H183 each bind FAD. Residue R188 participates in dUMP binding. R188 (involved in ionization of N3 of dUMP, leading to its activation) is an active-site residue.

It belongs to the thymidylate synthase ThyX family. Homotetramer. FAD is required as a cofactor.

The enzyme catalyses dUMP + (6R)-5,10-methylene-5,6,7,8-tetrahydrofolate + NADPH + H(+) = dTMP + (6S)-5,6,7,8-tetrahydrofolate + NADP(+). Its pathway is pyrimidine metabolism; dTTP biosynthesis. In terms of biological role, catalyzes the reductive methylation of 2'-deoxyuridine-5'-monophosphate (dUMP) to 2'-deoxythymidine-5'-monophosphate (dTMP) while utilizing 5,10-methylenetetrahydrofolate (mTHF) as the methyl donor, and NADPH and FADH(2) as the reductant. The chain is Flavin-dependent thymidylate synthase from Treponema denticola (strain ATCC 35405 / DSM 14222 / CIP 103919 / JCM 8153 / KCTC 15104).